We begin with the raw amino-acid sequence, 636 residues long: Eukaryotic peptide chain release factor GTP-binding subunit ERF3A (636 aa).

Composition is skewed to gly residues over residues M1–S16 and A103–G116. Disordered stretches follow at residues M1–A54 and L90–A206. Positions V121 to M138 are enriched in polar residues. The span at S183–E193 shows a compositional bias: acidic residues. In terms of domain architecture, tr-type G spans K209–V435. A G1 region spans residues G218 to S225. D221–T226 lines the GTP pocket. The segment at G274 to E278 is G2. The interval D295–G298 is G3. Residues N357 to D360 and S399 to L401 contribute to the GTP site. The tract at residues N357 to D360 is G4. Residues S399 to L401 are G5.

This sequence belongs to the TRAFAC class translation factor GTPase superfamily. Classic translation factor GTPase family. ERF3 subfamily. As to quaternary structure, component of the eRF1-eRF3-GTP ternary complex, composed of ETF1/ERF1 and ERF3 (GSPT1/ERF3A or GSPT2/ERF3B) and GTP. Component of the transient SURF (SMG1-UPF1-eRF1-eRF3) complex. The ETF1-GSPT1 complex interacts with JMJD4. Interacts with PABPC1. Interacts with SHFL.

It carries out the reaction GTP + H2O = GDP + phosphate + H(+). GTPase component of the eRF1-eRF3-GTP ternary complex, a ternary complex that mediates translation termination in response to the termination codons UAA, UAG and UGA. GSPT1/ERF3A mediates ETF1/ERF1 delivery to stop codons: The eRF1-eRF3-GTP complex binds to a stop codon in the ribosomal A-site. GTP hydrolysis by GSPT1/ERF3A induces a conformational change that leads to its dissociation, permitting ETF1/ERF1 to accommodate fully in the A-site. Component of the transient SURF complex which recruits UPF1 to stalled ribosomes in the context of nonsense-mediated decay (NMD) of mRNAs containing premature stop codons. Required for SHFL-mediated translation termination which inhibits programmed ribosomal frameshifting (-1PRF) of mRNA from viruses and cellular genes. The chain is Eukaryotic peptide chain release factor GTP-binding subunit ERF3A (Gspt1) from Mus musculus (Mouse).